Consider the following 368-residue polypeptide: Histidinol-phosphate aminotransferase (368 aa).

An N6-(pyridoxal phosphate)lysine modification is found at Lys-224.

This sequence belongs to the class-II pyridoxal-phosphate-dependent aminotransferase family. Histidinol-phosphate aminotransferase subfamily. Homodimer. Pyridoxal 5'-phosphate serves as cofactor.

The enzyme catalyses L-histidinol phosphate + 2-oxoglutarate = 3-(imidazol-4-yl)-2-oxopropyl phosphate + L-glutamate. The protein operates within amino-acid biosynthesis; L-histidine biosynthesis; L-histidine from 5-phospho-alpha-D-ribose 1-diphosphate: step 7/9. This Agrobacterium fabrum (strain C58 / ATCC 33970) (Agrobacterium tumefaciens (strain C58)) protein is Histidinol-phosphate aminotransferase.